The primary structure comprises 368 residues: COP9 signalosome complex subunit 5 (368 aa).

The 138-residue stretch at 56-193 (IKISAIALLK…IGAFRTYPEG (138 aa)) folds into the MPN domain. Residues His139, His141, and Asp152 each contribute to the Zn(2+) site. The JAMM motif motif lies at 139-152 (HSHPGYGCWLSGID). The interval 347–368 (TEPEKAGPSPSAPEPAVEMADA) is disordered.

Belongs to the peptidase M67A family. CSN5 subfamily. In terms of assembly, component of the CSN complex, probably composed of csn-1, csn-2, csn-3, csn-4, csn-5, csn-6 and csn-7. Within the complex it probably interacts directly with csn-1. Interacts with glh-1 and glh-3. Interacts with lag-1. Interacts with kgb-1. A divalent metal cation is required as a cofactor.

Its subcellular location is the cytoplasm. It is found in the nucleus. Functionally, probable protease subunit of the COP9 signalosome complex (CSN), a complex involved in various cellular and developmental processes. The CSN complex is an essential regulator of the ubiquitin (Ubl) conjugation pathway by mediating the deneddylation of the cullin subunits of the SCF-type E3 ligase complexes, leading to decrease the Ubl ligase activity of SCF. In the complex, it probably acts as the catalytic center that mediates the cleavage of Nedd8 from cullins. It however has no metalloprotease activity by itself and requires the other subunits of the CSN complex. The CSN complex plays an essential role in embryogenesis and oogenesis and is required to regulate microtubule stability in the early embryo. Mediates mei-3/katanin targeting for degradation at the meiosis to mitosis transition via deneddylation of cul-3. May stabilize glh-1 protein levels by antagonizing kgb-1. In Caenorhabditis elegans, this protein is COP9 signalosome complex subunit 5 (csn-5).